Consider the following 38-residue polypeptide: MKVKASVKKRSADDIIVRRKGRVYVINKKNRRHNQRQG.

This sequence belongs to the bacterial ribosomal protein bL36 family.

This is Large ribosomal subunit protein bL36 from Acholeplasma laidlawii (strain PG-8A).